A 396-amino-acid chain; its full sequence is 1-deoxy-D-xylulose 5-phosphate reductoisomerase (396 aa).

NADPH is bound by residues Thr17, Gly18, Ser19, Ile20, Asn47, and Asn130. Lys131 is a binding site for 1-deoxy-D-xylulose 5-phosphate. Glu132 contacts NADPH. Residue Asp156 coordinates Mn(2+). 1-deoxy-D-xylulose 5-phosphate contacts are provided by Ser157, Glu158, Ser182, and His205. Glu158 provides a ligand contact to Mn(2+). Gly211 is a binding site for NADPH. Positions 218, 223, 224, and 227 each coordinate 1-deoxy-D-xylulose 5-phosphate. Position 227 (Glu227) interacts with Mn(2+).

Belongs to the DXR family. It depends on Mg(2+) as a cofactor. The cofactor is Mn(2+).

It catalyses the reaction 2-C-methyl-D-erythritol 4-phosphate + NADP(+) = 1-deoxy-D-xylulose 5-phosphate + NADPH + H(+). Its pathway is isoprenoid biosynthesis; isopentenyl diphosphate biosynthesis via DXP pathway; isopentenyl diphosphate from 1-deoxy-D-xylulose 5-phosphate: step 1/6. Its function is as follows. Catalyzes the NADPH-dependent rearrangement and reduction of 1-deoxy-D-xylulose-5-phosphate (DXP) to 2-C-methyl-D-erythritol 4-phosphate (MEP). The protein is 1-deoxy-D-xylulose 5-phosphate reductoisomerase of Rhizobium etli (strain ATCC 51251 / DSM 11541 / JCM 21823 / NBRC 15573 / CFN 42).